Consider the following 124-residue polypeptide: UPF0225 protein SCO1677 (124 aa).

This sequence belongs to the UPF0225 family.

The sequence is that of UPF0225 protein SCO1677 from Streptomyces coelicolor (strain ATCC BAA-471 / A3(2) / M145).